The sequence spans 399 residues: Cytochrome P450 FAS1 (399 aa).

Heme is bound at residue cysteine 349.

Belongs to the cytochrome P450 family. The cofactor is heme.

It localises to the cytoplasm. Its function is as follows. May be involved in the biosynthesis of cytokinin phytohormones and in host plant fasciation (leafy gall). This chain is Cytochrome P450 FAS1 (fas1), found in Rhodococcoides fascians (Rhodococcus fascians).